The primary structure comprises 419 residues: Endochitinase 2 (419 aa).

The first 18 residues, 1–18 (MHHLRALVGVGLAGLAAG), serve as a signal peptide directing secretion. Positions 35–343 (AQNVVYWGQN…QQAKSILVNG (309 aa)) constitute a GH18 domain. Residue Asn-153 is glycosylated (N-linked (GlcNAc...) asparagine). Catalysis depends on Glu-173, which acts as the Proton donor. Asn-237 and Asn-256 each carry an N-linked (GlcNAc...) asparagine glycan. Positions 350-381 (GPPSSTPATAPAPTATTMPSSTSVSSPAASPT) are enriched in low complexity. A disordered region spans residues 350–386 (GPPSSTPATAPAPTATTMPSSTSVSSPAASPTGGTVP). The region spanning 383–419 (GTVPQWGQCGGEGYSGPTQCVAPYQCVKQGDWWSSCR) is the CBM1 domain.

The protein belongs to the glycosyl hydrolase 18 family. Chitinase class III subfamily.

It localises to the secreted. It catalyses the reaction Random endo-hydrolysis of N-acetyl-beta-D-glucosaminide (1-&gt;4)-beta-linkages in chitin and chitodextrins.. Functionally, secreted chitinase involved in the degradation of chitin, a component of the cell walls of fungi and exoskeletal elements of some animals (including worms and arthropods). Participates in the infection process and directly acts in the penetration process of the host cuticle. The polypeptide is Endochitinase 2 (chi2) (Metarhizium robertsii (strain ARSEF 23 / ATCC MYA-3075) (Metarhizium anisopliae (strain ARSEF 23))).